We begin with the raw amino-acid sequence, 156 residues long: Phosphopantetheine adenylyltransferase (156 aa).

Threonine 9 serves as a coordination point for substrate. ATP contacts are provided by residues 9–10 (TF) and histidine 17. The substrate site is built by lysine 41, leucine 73, and arginine 87. ATP is bound by residues 88–90 (GVR), glutamate 98, and 123–129 (WAFVSST).

The protein belongs to the bacterial CoaD family. As to quaternary structure, homohexamer. The cofactor is Mg(2+).

It is found in the cytoplasm. It carries out the reaction (R)-4'-phosphopantetheine + ATP + H(+) = 3'-dephospho-CoA + diphosphate. It functions in the pathway cofactor biosynthesis; coenzyme A biosynthesis; CoA from (R)-pantothenate: step 4/5. Its function is as follows. Reversibly transfers an adenylyl group from ATP to 4'-phosphopantetheine, yielding dephospho-CoA (dPCoA) and pyrophosphate. This chain is Phosphopantetheine adenylyltransferase, found in Haemophilus influenzae (strain 86-028NP).